A 216-amino-acid polypeptide reads, in one-letter code: Phosphatidylserine decarboxylase proenzyme (216 aa).

Catalysis depends on S185, which acts as the Schiff-base intermediate with substrate; via pyruvic acid. S185 bears the Pyruvic acid (Ser); by autocatalysis mark.

This sequence belongs to the phosphatidylserine decarboxylase family. PSD-A subfamily. Heterodimer of a large membrane-associated beta subunit and a small pyruvoyl-containing alpha subunit. It depends on pyruvate as a cofactor. Is synthesized initially as an inactive proenzyme. Formation of the active enzyme involves a self-maturation process in which the active site pyruvoyl group is generated from an internal serine residue via an autocatalytic post-translational modification. Two non-identical subunits are generated from the proenzyme in this reaction, and the pyruvate is formed at the N-terminus of the alpha chain, which is derived from the carboxyl end of the proenzyme. The post-translation cleavage follows an unusual pathway, termed non-hydrolytic serinolysis, in which the side chain hydroxyl group of the serine supplies its oxygen atom to form the C-terminus of the beta chain, while the remainder of the serine residue undergoes an oxidative deamination to produce ammonia and the pyruvoyl prosthetic group on the alpha chain.

It localises to the cell membrane. The enzyme catalyses a 1,2-diacyl-sn-glycero-3-phospho-L-serine + H(+) = a 1,2-diacyl-sn-glycero-3-phosphoethanolamine + CO2. Its pathway is phospholipid metabolism; phosphatidylethanolamine biosynthesis; phosphatidylethanolamine from CDP-diacylglycerol: step 2/2. In terms of biological role, catalyzes the formation of phosphatidylethanolamine (PtdEtn) from phosphatidylserine (PtdSer). The protein is Phosphatidylserine decarboxylase proenzyme of Nitrosomonas europaea (strain ATCC 19718 / CIP 103999 / KCTC 2705 / NBRC 14298).